Here is a 433-residue protein sequence, read N- to C-terminus: 23S rRNA (uracil(1939)-C(5))-methyltransferase RlmD (433 aa).

Positions 10 to 68 (RTTTRQIITVSVNDLDSFGQGVARHNGKTLFIPGLLPQENAEVTVTEDKKQYARAKVVR) constitute a TRAM domain. The [4Fe-4S] cluster site is built by C81, C87, C90, and C162. Q265, F294, N299, E315, N342, and D363 together coordinate S-adenosyl-L-methionine. Residue C389 is the Nucleophile of the active site.

This sequence belongs to the class I-like SAM-binding methyltransferase superfamily. RNA M5U methyltransferase family. RlmD subfamily.

The catalysed reaction is uridine(1939) in 23S rRNA + S-adenosyl-L-methionine = 5-methyluridine(1939) in 23S rRNA + S-adenosyl-L-homocysteine + H(+). Its function is as follows. Catalyzes the formation of 5-methyl-uridine at position 1939 (m5U1939) in 23S rRNA. The protein is 23S rRNA (uracil(1939)-C(5))-methyltransferase RlmD of Shigella sonnei (strain Ss046).